The chain runs to 179 residues: Large ribosomal subunit protein uL5 (179 aa).

It belongs to the universal ribosomal protein uL5 family. As to quaternary structure, part of the 50S ribosomal subunit; part of the 5S rRNA/L5/L18/L25 subcomplex. Contacts the 5S rRNA and the P site tRNA. Forms a bridge to the 30S subunit in the 70S ribosome.

Its function is as follows. This is one of the proteins that bind and probably mediate the attachment of the 5S RNA into the large ribosomal subunit, where it forms part of the central protuberance. In the 70S ribosome it contacts protein S13 of the 30S subunit (bridge B1b), connecting the 2 subunits; this bridge is implicated in subunit movement. Contacts the P site tRNA; the 5S rRNA and some of its associated proteins might help stabilize positioning of ribosome-bound tRNAs. This is Large ribosomal subunit protein uL5 from Prochlorococcus marinus (strain MIT 9303).